A 126-amino-acid chain; its full sequence is Small ribosomal subunit protein uS13c (126 aa).

The segment at 95–126 is disordered; the sequence is GLPLRGQNTRTNARTKRGIKKTMAGKKKAPRK. Positions 107-126 are enriched in basic residues; the sequence is ARTKRGIKKTMAGKKKAPRK.

The protein belongs to the universal ribosomal protein uS13 family. Part of the 30S ribosomal subunit.

It localises to the plastid. The protein resides in the chloroplast. Its function is as follows. Located at the top of the head of the 30S subunit, it contacts several helices of the 16S rRNA. This chain is Small ribosomal subunit protein uS13c, found in Gracilaria tenuistipitata var. liui (Red alga).